The sequence spans 667 residues: WD repeat-containing protein 48 homolog (667 aa).

WD repeat units lie at residues 26–65 (QHRNGVNALQLDANNGKLYSAGRDAIIRVWNTRTESNEKY), 71–110 (HHNDWVNDIVLCCNGRNLISASCDTTVKVWNAQKGFCMST), 113–152 (THRDYVQALAYAKDREQVASAGLDKAIFLWDVNTLTALTA), 164–203 (GSKDSIYSLAMNPSGTVIVSGSTENILRIWDPRTCMRSMK), 206–245 (GHTENVRCLVVSPDGNQVVSGSSDGTIKVWNLGQQRCVQT), 248–287 (VHKEGVWSLLMSENFQYIISGSRDRNIIVTEMRNPSNKML), 290–329 (EEQAPVLSLGYNIDKTGVWATTWNSDIRCWKLPMYDRCTL), and 350–389 (KGGAAIKECTVLNDKRYIITKDSQDQVVVYDVLRVVKKEQ). The segment at 591 to 615 (ETTPSGGNANNSLQNSQSDANSEGS) is disordered.

Belongs to the WD repeat WDR48 family. As to quaternary structure, catalytic component of the Usp12-46 deubiquitylase complex consisting of Usp12-46, Wdr20 and Uaf1; regulatory subunit that, together wtih Wdr20, stabilizes Usp12-46. The Usp12-46 deubiquitylase complex associates with arr/arrow; the interaction leads to deubiquitination and stabilization of arr/arrow.

In terms of biological role, regulatory component of the Usp12-46 deubiquitylase complex. activates deubiquitination by increasing the catalytic turnover without increasing the affinity of deubiquitinating enzymes for the substrate. The complex deubiquitylates the wg/wingless-signaling receptor arr/arrow, which stabilizes the receptor and increases its concentration at the cell surface; this enhances the sensitivity of cells to wg/wingless-signal stimulation. This increases the amplitude and spatial range of the signaling response to the wg/wingless morphogen gradient, facilitating the precise concentration-dependent regulation of its target genes. Together with Wdr20 and Usp12-46 required for wg/wingless-mediated signaling in the wing imaginal disc and for wg/wingless-dependent regulation of intestinal stem cell proliferation. The chain is WD repeat-containing protein 48 homolog from Drosophila ananassae (Fruit fly).